Here is a 463-residue protein sequence, read N- to C-terminus: Probable ECA polymerase (463 aa).

Transmembrane regions (helical) follow at residues 6–26 (FGGLFVVYLISVIFILSLTWM), 39–59 (FSLLYLLTFYFGFPFTCVLVF), 65–85 (VVPVQFLLQAMLSATAFYAIY), 112–132 (ANLTWLLLALIAVATVGIFFL), 154–174 (GVALKRFFYFFIPAMLVVYFL), 180–200 (AWLMFLIGTVAFGMLTYVIVG), 201–221 (GTRANLIIAFALFLFIGIVRG), 222–242 (WITLWMLVAAGAFGIVGMFWL), 340–360 (LVVMGGVLFIPLGAIAVGLVI), 377–397 (YKAAILQAFCFGAVFNIIVLT), and 408–428 (VVFFCLVFGLCLLVAKLLYWL).

This sequence belongs to the WzyE family. As to quaternary structure, probably part of a complex composed of WzxE, WzyE and WzzE.

It localises to the cell inner membrane. It participates in bacterial outer membrane biogenesis; enterobacterial common antigen biosynthesis. In terms of biological role, probably involved in the polymerization of enterobacterial common antigen (ECA) trisaccharide repeat units. In Pectobacterium carotovorum subsp. carotovorum (strain PC1), this protein is Probable ECA polymerase.